The chain runs to 152 residues: Xanthine-guanine phosphoribosyltransferase (152 aa).

Residues 37 to 38 (RG), arginine 69, and 88 to 96 (DDLVDSGDT) each bind 5-phospho-alpha-D-ribose 1-diphosphate. Position 69 (arginine 69) interacts with GMP. Aspartate 89 serves as a coordination point for Mg(2+). 2 residues coordinate guanine: aspartate 92 and isoleucine 135. Residues aspartate 92 and isoleucine 135 each coordinate xanthine. GMP contacts are provided by residues 92–96 (DSGDT) and 134–135 (WI).

The protein belongs to the purine/pyrimidine phosphoribosyltransferase family. XGPT subfamily. In terms of assembly, homotetramer. It depends on Mg(2+) as a cofactor.

The protein resides in the cell inner membrane. The catalysed reaction is GMP + diphosphate = guanine + 5-phospho-alpha-D-ribose 1-diphosphate. The enzyme catalyses XMP + diphosphate = xanthine + 5-phospho-alpha-D-ribose 1-diphosphate. It carries out the reaction IMP + diphosphate = hypoxanthine + 5-phospho-alpha-D-ribose 1-diphosphate. It functions in the pathway purine metabolism; GMP biosynthesis via salvage pathway; GMP from guanine: step 1/1. Its pathway is purine metabolism; XMP biosynthesis via salvage pathway; XMP from xanthine: step 1/1. In terms of biological role, purine salvage pathway enzyme that catalyzes the transfer of the ribosyl-5-phosphate group from 5-phospho-alpha-D-ribose 1-diphosphate (PRPP) to the N9 position of the 6-oxopurines guanine and xanthine to form the corresponding ribonucleotides GMP (guanosine 5'-monophosphate) and XMP (xanthosine 5'-monophosphate), with the release of PPi. To a lesser extent, also acts on hypoxanthine. The sequence is that of Xanthine-guanine phosphoribosyltransferase from Aliivibrio salmonicida (strain LFI1238) (Vibrio salmonicida (strain LFI1238)).